Reading from the N-terminus, the 370-residue chain is 4-hydroxy-3-methylbut-2-en-1-yl diphosphate synthase (flavodoxin) (370 aa).

[4Fe-4S] cluster is bound by residues cysteine 270, cysteine 273, cysteine 305, and glutamate 312.

It belongs to the IspG family. [4Fe-4S] cluster serves as cofactor.

It carries out the reaction (2E)-4-hydroxy-3-methylbut-2-enyl diphosphate + oxidized [flavodoxin] + H2O + 2 H(+) = 2-C-methyl-D-erythritol 2,4-cyclic diphosphate + reduced [flavodoxin]. It participates in isoprenoid biosynthesis; isopentenyl diphosphate biosynthesis via DXP pathway; isopentenyl diphosphate from 1-deoxy-D-xylulose 5-phosphate: step 5/6. In terms of biological role, converts 2C-methyl-D-erythritol 2,4-cyclodiphosphate (ME-2,4cPP) into 1-hydroxy-2-methyl-2-(E)-butenyl 4-diphosphate. In Ectopseudomonas mendocina (strain ymp) (Pseudomonas mendocina), this protein is 4-hydroxy-3-methylbut-2-en-1-yl diphosphate synthase (flavodoxin).